Reading from the N-terminus, the 599-residue chain is Nucleosomal histone kinase 1 (599 aa).

One can recognise a Protein kinase domain in the interval Trp47–Phe328. ATP contacts are provided by residues Ile53 to Ile61 and Lys77. Asp183 acts as the Proton acceptor in catalysis. Disordered stretches follow at residues Asn340–Arg507 and Arg532–Gly599. Residues Pro349–Gly361 show a composition bias toward polar residues. Phosphoserine is present on residues Ser376, Ser381, Ser382, Ser388, and Ser390. Residues Val435–Thr448 show a composition bias toward basic and acidic residues. Ser483 is subject to Phosphoserine. The span at Ser546–Ser558 shows a compositional bias: low complexity. Residues Ser564 and Ser586 each carry the phosphoserine modification. Thr589 carries the phosphothreonine modification.

Belongs to the protein kinase superfamily. CK1 Ser/Thr protein kinase family. VRK subfamily. May interact with Unc-89 (via protein kinase domain 1). Interacts with L(2)gl. Requires Mg(2+) as cofactor. Post-translationally, phosphorylated during mitosis and female meiosis. As to expression, expressed in ovaries (at protein level). Expressed in indirect flight muscle (IFM) (at protein level).

It is found in the cytoplasm. The protein resides in the nucleus. Its subcellular location is the chromosome. The protein localises to the myofibril. It localises to the sarcomere. It is found in the z line. The protein resides in the m line. The catalysed reaction is L-seryl-[protein] + ATP = O-phospho-L-seryl-[protein] + ADP + H(+). The enzyme catalyses L-threonyl-[protein] + ATP = O-phospho-L-threonyl-[protein] + ADP + H(+). Its function is as follows. Serine/threonine-protein kinase involved in somatic mitosis and female meiosis. Required for spindle organization in mitosis, and for the establishment or maintenance of meiosis-specific chromosomal configurations, including the prophase I karyosome and the metaphase I spindle. Specifically phosphorylates nucleosomal H2A on 'Thr-119'. Required for the development and organization of indirect flight muscle sarcomeres by regulating the formation of M line and H zone and the correct assembly of thick and thin filaments in the sarcomere. In Drosophila melanogaster (Fruit fly), this protein is Nucleosomal histone kinase 1 (ball).